The following is a 265-amino-acid chain: Mlc titration factor A (265 aa).

Residues His-111, His-148, His-152, and Glu-211 each contribute to the Zn(2+) site.

The protein belongs to the MtfA family. In terms of assembly, interacts with Mlc. Zn(2+) serves as cofactor.

It is found in the cytoplasm. Its function is as follows. Involved in the modulation of the activity of the glucose-phosphotransferase system (glucose-PTS). Interacts with the transcriptional repressor Mlc, preventing its interaction with DNA and leading to the modulation of expression of genes regulated by Mlc, including ptsG, which encodes the PTS system glucose-specific EIICB component. In terms of biological role, shows zinc-dependent metallopeptidase activity. In Escherichia coli O6:K15:H31 (strain 536 / UPEC), this protein is Mlc titration factor A.